A 518-amino-acid chain; its full sequence is Flagellin (518 aa).

Belongs to the bacterial flagellin family.

Its subcellular location is the secreted. The protein localises to the bacterial flagellum. Its function is as follows. Flagellin is the subunit protein which polymerizes to form the filaments of bacterial flagella. The polypeptide is Flagellin (flaA) (Aquifex aeolicus (strain VF5)).